A 1014-amino-acid polypeptide reads, in one-letter code: SUMO-specific isopeptidase USPL1 (1014 aa).

Disordered regions lie at residues 137–158 (TFTD…EEQP) and 275–318 (EEKP…VSDE). Over residues 275 to 289 (EEKPVSLVHTEDQHL) the composition is skewed to basic and acidic residues. The USP domain maps to 355–636 (LFWKNEENMC…EFHILFWETD (282 aa)). Residue C364 is the Nucleophile of the active site. Residues 364–631 (CWLDAMLVML…PFPSSEFHIL (268 aa)) are SUMO-binding. H592 functions as the Proton acceptor in the catalytic mechanism. Disordered stretches follow at residues 794–823 (HPSF…YDKH) and 844–867 (NSQP…AGQE). Pro residues predominate over residues 802–815 (IRPPPPLPPAPKPK).

Belongs to the peptidase C19 family.

It is found in the nucleus. Its subcellular location is the cajal body. Its function is as follows. SUMO-specific isopeptidase involved in protein desumoylation. Specifically binds SUMO proteins with a higher affinity for sumo2 and sumo3 which it cleaves more efficiently. Also able to process full-length SUMO proteins to their mature forms. Plays a key role in RNA polymerase-II-mediated snRNA transcription in the Cajal bodies. Is a component of complexes that can bind to U snRNA genes. This is SUMO-specific isopeptidase USPL1 (uspl1) from Danio rerio (Zebrafish).